The chain runs to 375 residues: 4-hydroxy-3-methylbut-2-en-1-yl diphosphate synthase (flavodoxin) (375 aa).

Positions 270, 273, 305, and 312 each coordinate [4Fe-4S] cluster.

It belongs to the IspG family. [4Fe-4S] cluster serves as cofactor.

It catalyses the reaction (2E)-4-hydroxy-3-methylbut-2-enyl diphosphate + oxidized [flavodoxin] + H2O + 2 H(+) = 2-C-methyl-D-erythritol 2,4-cyclic diphosphate + reduced [flavodoxin]. Its pathway is isoprenoid biosynthesis; isopentenyl diphosphate biosynthesis via DXP pathway; isopentenyl diphosphate from 1-deoxy-D-xylulose 5-phosphate: step 5/6. In terms of biological role, converts 2C-methyl-D-erythritol 2,4-cyclodiphosphate (ME-2,4cPP) into 1-hydroxy-2-methyl-2-(E)-butenyl 4-diphosphate. The chain is 4-hydroxy-3-methylbut-2-en-1-yl diphosphate synthase (flavodoxin) from Yersinia pestis (strain Pestoides F).